We begin with the raw amino-acid sequence, 919 residues long: Kinesin-like protein KIN-6 (919 aa).

Residues 1–59 (MVRLSTKPPNPKVEMNLKEPPITGAGAGAAASPPAPSTLRRNPPRSARPPPTPLPNSKP) are disordered. The span at 28–45 (GAAASPPAPSTLRRNPPR) shows a compositional bias: low complexity. Over residues 46–56 (SARPPPTPLPN) the composition is skewed to pro residues. A Kinesin motor domain is found at 72–415 (RLKVFLRIRP…LRQASPYMKI (344 aa)). 171-178 (GPTGSGKT) serves as a coordination point for ATP. 5 disordered regions span residues 591–615 (EEVSEESTGHGPERSSDYDDKTGTG), 674–700 (SESCSDGGGVTHSSSSLDHPSDQSFTD), 711–730 (SPQFIGASKKSPIEQSEEER), 737–764 (TTEGIQQNVHTRGVKHHSTPSCSQEVNS), and 886–919 (KEEKVKSSRDAMGRSDKLIRLLTDHPPRARGRAQ). The span at 597-612 (STGHGPERSSDYDDKT) shows a compositional bias: basic and acidic residues. A compositionally biased stretch (low complexity) spans 685–697 (HSSSSLDHPSDQS). Residues 755 to 764 (TPSCSQEVNS) show a composition bias toward polar residues. The segment covering 886 to 912 (KEEKVKSSRDAMGRSDKLIRLLTDHPP) has biased composition (basic and acidic residues).

Belongs to the TRAFAC class myosin-kinesin ATPase superfamily. Kinesin family. KIN-6 subfamily.

This chain is Kinesin-like protein KIN-6, found in Oryza sativa subsp. japonica (Rice).